The chain runs to 531 residues: Chaperonin GroEL, chloroplastic (531 aa).

ATP contacts are provided by residues Thr30 to Pro33, Asp87 to Thr91, Gly415, Asn481 to Ala483, and Asp497.

The protein belongs to the chaperonin (HSP60) family. In terms of assembly, forms a cylinder of 14 subunits composed of two heptameric rings stacked back-to-back. Interacts with the co-chaperonin GroES.

It is found in the plastid. The protein resides in the chloroplast. It catalyses the reaction ATP + H2O + a folded polypeptide = ADP + phosphate + an unfolded polypeptide.. Its function is as follows. Together with its co-chaperonin GroES, plays an essential role in assisting protein folding. The GroEL-GroES system forms a nano-cage that allows encapsulation of the non-native substrate proteins and provides a physical environment optimized to promote and accelerate protein folding. The polypeptide is Chaperonin GroEL, chloroplastic (Emiliania huxleyi (Coccolithophore)).